Reading from the N-terminus, the 557-residue chain is MHKTDIEIAHTAKKQHITEIAQKIGIAHENLIPYGHDKAKISSSYIKSLNNNPDGKLILVTAINPTPAGEGKTTTTVGLSDALNLIGKKTIATLREPSLGPCFGVKGGAAGGGYAQVIPMDDLNLHFTGDFHAITAAHNLLAAMIDNHIYWGNPLNIDPRRIVWKRVLDMNDRALRDIVISLGGITNGFPRQTGFDITVASEIMALLCLSENLENLTQRLKKIIVAYRHDKTPVTVADLNAEGAMAVLLKDAIQPNLVQTIENNPVLVHGGPFANIAHGCNSVIATKTALKLADYVVTEAGFGADLGAEKFFNIKCRQTGIVPNATVIVATIRALKMNGGVDKNNLTEENITALEKGAANLVRHIKNMALYGIPCVVAINHFDSDSDAEIRTLQKIVATTGHKALICKHWEQGGKGAVALAQELVTLIEKQDSDFKVLYQDDIPLVQKINCIITKLYGGRGAIISATILKQLESWEKEGFGTYPICMAKTPYSFSADPKQYGAPVDFEIPVREVRLCAGAGFIVVICGDVMTMPGLPHYPAAEKIHLDENDQIQGLS.

Residue 66–73 coordinates ATP; it reads TPAGEGKT.

This sequence belongs to the formate--tetrahydrofolate ligase family.

It catalyses the reaction (6S)-5,6,7,8-tetrahydrofolate + formate + ATP = (6R)-10-formyltetrahydrofolate + ADP + phosphate. The protein operates within one-carbon metabolism; tetrahydrofolate interconversion. This chain is Formate--tetrahydrofolate ligase, found in Bartonella tribocorum (strain CIP 105476 / IBS 506).